The following is a 56-amino-acid chain: 4Fe-4S ferredoxin FdxA (56 aa).

4Fe-4S ferredoxin-type domains follow at residues 1 to 28 and 29 to 56; these read MAYV…SSGD and DRYV…PVQA. Cys9, Cys12, Cys15, Cys19, Cys38, Cys41, Cys44, and Cys48 together coordinate [4Fe-4S] cluster.

Requires [4Fe-4S] cluster as cofactor.

Ferredoxins are iron-sulfur proteins that transfer electrons in a wide variety of metabolic reactions. The protein is 4Fe-4S ferredoxin FdxA of Gottschalkia acidurici (strain ATCC 7906 / DSM 604 / BCRC 14475 / CIP 104303 / KCTC 5404 / NCIMB 10678 / 9a) (Clostridium acidurici).